Consider the following 360-residue polypeptide: POU domain, class 5, transcription factor 1 (360 aa).

Disordered stretches follow at residues 1–50 (MAGH…IGPG) and 87–118 (QGGLETPQPEGEAGAGVESNSEGASPEPCAAP). The short motif at 4 to 12 (HLASDFAFS) is the 9aaTAD element. Positions 41 to 50 (PPGGSGIGPG) are enriched in gly residues. Phosphoserine; by MAPK is present on S111. Residue K123 forms a Glycyl lysine isopeptide (Lys-Gly) (interchain with G-Cter in SUMO) linkage. Residues 138–212 (DIKALQKDLE…LLQKWVEEAD (75 aa)) form the POU-specific domain. DNA contacts are provided by R157 and Q164. DNA-binding stretches follow at residues 180 to 186 (SQTTICR) and 193 to 196 (SFKN). Residues 230 to 289 (RKRKRTSIENRVRGNLESMFLQCPKPTLQQISHIAQQLGLEKDVVRVWFCNRRQKGKRSS) constitute a DNA-binding region (homeobox). T235 is subject to Phosphothreonine. A phosphoserine mark is found at S236, S289, and S290. The interval 287 to 316 (RSSSDYSQREDFEAAGSPFPGGPVSFPLAP) is disordered. Over residues 302 to 313 (GSPFPGGPVSFP) the composition is skewed to low complexity. S355 carries the post-translational modification Phosphoserine.

Belongs to the POU transcription factor family. Class-5 subfamily. In terms of assembly, interacts with PKM. Interacts with WWP2. Interacts with UBE2I and ZSCAN10. Interacts with PCGF1. Interacts with ESRRB; recruits ESRRB near the POU5F1-SOX2 element in the NANOG proximal promoter; the interaction is DNA independent. Interacts with ZNF322. Interacts with MAPK8 and MAPK9; the interaction allows MAPK8 and MAPK9 to phosphorylate POU5F1 on Ser-355. Interacts (when phosphorylated on Ser-355) with FBXW8. Interacts with FBXW4. Interacts with SOX2 and SOX15; binds synergistically with either SOX2 or SOX15 to DNA. Interacts with DDX56. Post-translationally, sumoylation enhances the protein stability, DNA binding and transactivation activity. Sumoylation is required for enhanced YES1 expression. Ubiquitinated; undergoes 'Lys-63'-linked polyubiquitination by WWP2 leading to proteasomal degradation. In terms of processing, ERK1/2-mediated phosphorylation at Ser-111 promotes nuclear exclusion and proteasomal degradation. Phosphorylation at Thr-235 and Ser-236 decrease DNA-binding and alters ability to activate transcription.

The protein localises to the cytoplasm. It is found in the nucleus. Its function is as follows. Transcription factor that binds to the octamer motif (5'-ATTTGCAT-3'). Forms a trimeric complex with SOX2 or SOX15 on DNA and controls the expression of a number of genes involved in embryonic development such as YES1, FGF4, UTF1 and ZFP206. Critical for early embryogenesis and for embryonic stem cell pluripotency. This Sus scrofa (Pig) protein is POU domain, class 5, transcription factor 1 (POU5F1).